Reading from the N-terminus, the 309-residue chain is Olfactory receptor 7A40 (309 aa).

Over 1–26 (MELKNDTQISKFILLGISEDPLWQPF) the chain is Extracellular. Asn5 carries an N-linked (GlcNAc...) asparagine glycan. A helical transmembrane segment spans residues 27–47 (LFGLFLFMYLVTLLGNLLIII). Residues 48-57 (ATITDSHLHT) lie on the Cytoplasmic side of the membrane. The helical transmembrane segment at 58–78 (PMYFFLSNLSFADICFTSASI) threads the bilayer. Residues 79 to 97 (PKMLVNIQTKNKVITYEGC) are Extracellular-facing. Residues Cys97 and Cys179 are joined by a disulfide bond. The helical transmembrane segment at 98-118 (ISQVFFFILFGVLDNFLLAVM) threads the bilayer. Residues 119 to 139 (AYDRYVAICHPLHYMVIMNCR) lie on the Cytoplasmic side of the membrane. Residues 140–160 (LCGFLVLGSWVTTALNSLLQS) traverse the membrane as a helical segment. Residues 161–196 (SMALRLSFCTDLKIPHFVCELNQLVLLACNDTFPND) are Extracellular-facing. A helical membrane pass occupies residues 197–217 (MVMYFAAILLGGGPLAGILYS). The Cytoplasmic segment spans residues 218–244 (YSKIVSSIRAISSSQGKYKAFSTCASH). Residues 245-265 (LSVVSLFYSTLLGVYLSSSFT) form a helical membrane-spanning segment. Over 266–269 (QNSH) the chain is Extracellular. A helical membrane pass occupies residues 270–292 (STARASVMYSVVTPMLNPFIYSL). Topologically, residues 293-309 (RNKDLMGALRRLLRRKS) are cytoplasmic.

This sequence belongs to the G-protein coupled receptor 1 family.

The protein localises to the cell membrane. Functionally, odorant receptor. In Mus musculus (Mouse), this protein is Olfactory receptor 7A40.